Here is a 169-residue protein sequence, read N- to C-terminus: Regulator of ribonuclease activity A (169 aa).

Belongs to the RraA family. In terms of assembly, homotrimer. Binds to both RNA-binding sites in the C-terminal region of Rne and to RhlB.

It localises to the cytoplasm. Globally modulates RNA abundance by binding to RNase E (Rne) and regulating its endonucleolytic activity. Can modulate Rne action in a substrate-dependent manner by altering the composition of the degradosome. Modulates RNA-binding and helicase activities of the degradosome. The polypeptide is Regulator of ribonuclease activity A (Photorhabdus laumondii subsp. laumondii (strain DSM 15139 / CIP 105565 / TT01) (Photorhabdus luminescens subsp. laumondii)).